Consider the following 248-residue polypeptide: tRNA (guanine-N(7)-)-methyltransferase (248 aa).

Residues Glu80, Glu105, Asp132, and Asp155 each contribute to the S-adenosyl-L-methionine site. The active site involves Asp155. Substrate is bound by residues Lys159, Asp191, and 223–226 (TKFE).

It belongs to the class I-like SAM-binding methyltransferase superfamily. TrmB family.

The enzyme catalyses guanosine(46) in tRNA + S-adenosyl-L-methionine = N(7)-methylguanosine(46) in tRNA + S-adenosyl-L-homocysteine. It participates in tRNA modification; N(7)-methylguanine-tRNA biosynthesis. Catalyzes the formation of N(7)-methylguanine at position 46 (m7G46) in tRNA. The protein is tRNA (guanine-N(7)-)-methyltransferase of Nocardioides sp. (strain ATCC BAA-499 / JS614).